The chain runs to 350 residues: Putative transport protein YdbI (350 aa).

8 consecutive transmembrane segments (helical) span residues Ile-18–Leu-38, Val-67–Phe-87, Ile-145–Glu-165, Phe-207–Pro-227, Leu-229–Ile-249, Ile-257–Ile-277, Leu-289–Glu-309, and Phe-311–Leu-331.

Belongs to the autoinducer-2 exporter (AI-2E) (TC 2.A.86) family.

It is found in the cell membrane. This Bacillus subtilis (strain 168) protein is Putative transport protein YdbI (ydbI).